Here is a 2059-residue protein sequence, read N- to C-terminus: DNA polymerase theta (2059 aa).

The interval 25 to 45 (DKENAQPGNGNIQVQSAGNEV) is disordered. Residues 30 to 45 (QPGNGNIQVQSAGNEV) show a composition bias toward polar residues. The region spanning 243–416 (PRLLFEHCNL…WLDAELYITN (174 aa)) is the Helicase ATP-binding domain. 256–263 (APTSAGKT) contacts ATP. The DEAH box motif lies at 357-360 (DEVH). One can recognise a Helicase C-terminal domain in the interval 464-666 (CIETLLEGCS…HLKRALLEVI (203 aa)). 4 disordered regions span residues 1052–1073 (PPVK…KNPR), 1168–1190 (PQLA…VNEG), 1204–1274 (QRTQ…SRKV), and 1330–1372 (PHAS…GVSS). Over residues 1062–1071 (ENGTANSQKN) the composition is skewed to polar residues. The span at 1213–1274 (KDQPIQASRS…NANRTASRKV (62 aa)) shows a compositional bias: polar residues. Over residues 1355–1365 (REIEIDLESKN) the composition is skewed to basic and acidic residues.

This sequence belongs to the DNA polymerase type-A family. Mg(2+) is required as a cofactor. In adult males, cleaved to produce a 100 kDa form. Expressed in ovaries (at protein level).

Its subcellular location is the nucleus. The catalysed reaction is DNA(n) + a 2'-deoxyribonucleoside 5'-triphosphate = DNA(n+1) + diphosphate. With respect to regulation, resistant to aphidicolin, but sensitive to dideoxythymindine triphosphate (ddTTP) and N-ethyl malemide (NEM). Multifunctional protein with both DNA polymerase and ATPase activities. Might have 3' to 5' exonuclease activity. Plays a role in different DNA repair pathways such as DNA strand cross-link repair and microhomology-mediated end-joining (MMEJ), an alternative non-homologous end-joining (NHEJ) machinery triggered in response to double-strand breaks. MMEJ is an error-prone repair pathway that produces deletions of sequences from the strand being repaired and promotes genomic rearrangements, such as telomere fusions. Utilizes short microhomologies present in partially and fully single-stranded DNA (ssDNA) as primers for DNA synthesis. Prefers poly(dA)/oligo(dT) as a template-primer. The ATPase activity is necessary during interstrand cross-link (ICL) repair and has a critical role in generating templated insertions during MMEJ. Necessary for processing DNA damage induced by oxygen and N-ethylation. In follicle cells, contributes to double-strand break repair at physiological rereplication forks necessary for survival of fertilized eggs. The chain is DNA polymerase theta from Drosophila melanogaster (Fruit fly).